Consider the following 411-residue polypeptide: Copper resistance protein CRF1 (411 aa).

The copper-fist DNA-binding region spans 1 to 40; sequence MVVIEGIKYACERCIRGHRVSSCTHTQQPLIRIKPKGRPA. Zn(2+) contacts are provided by cysteine 11, cysteine 14, cysteine 23, and histidine 25. Low complexity-rich tracts occupy residues 115–190, 205–214, 227–241, and 350–370; these read QQQA…PHSP, SSSSLSSLHS, SHNS…ANSP, and SVAA…PPSS. 2 disordered regions span residues 115 to 241 and 348 to 389; these read QQQA…ANSP and EMSV…VSPA.

The protein resides in the nucleus. Functionally, transcriptional regulator involved in resistance to high copper concentration. This Yarrowia lipolytica (strain CLIB 122 / E 150) (Yeast) protein is Copper resistance protein CRF1 (CRF1).